The following is a 202-amino-acid chain: Molybdenum cofactor guanylyltransferase (202 aa).

GTP-binding positions include 9–11 (LAG), lysine 22, aspartate 70, and aspartate 96. Aspartate 96 contributes to the Mg(2+) binding site.

It belongs to the MobA family. As to quaternary structure, monomer. The cofactor is Mg(2+).

The protein localises to the cytoplasm. It catalyses the reaction Mo-molybdopterin + GTP + H(+) = Mo-molybdopterin guanine dinucleotide + diphosphate. In terms of biological role, transfers a GMP moiety from GTP to Mo-molybdopterin (Mo-MPT) cofactor (Moco or molybdenum cofactor) to form Mo-molybdopterin guanine dinucleotide (Mo-MGD) cofactor. The protein is Molybdenum cofactor guanylyltransferase of Desulfosudis oleivorans (strain DSM 6200 / JCM 39069 / Hxd3) (Desulfococcus oleovorans).